The chain runs to 137 residues: Outer membrane protein assembly factor BamE (137 aa).

The first 18 residues, 1–18 (MQVKTLLGATFLALSLAS), serve as a signal peptide directing secretion. Residue cysteine 19 is the site of N-palmitoyl cysteine attachment. Residue cysteine 19 is the site of S-diacylglycerol cysteine attachment.

It belongs to the BamE family. In terms of assembly, part of the Bam complex.

It localises to the cell outer membrane. Functionally, part of the outer membrane protein assembly complex, which is involved in assembly and insertion of beta-barrel proteins into the outer membrane. The protein is Outer membrane protein assembly factor BamE of Haemophilus influenzae (strain ATCC 51907 / DSM 11121 / KW20 / Rd).